The following is a 344-amino-acid chain: Nicotinate-nucleotide--dimethylbenzimidazole phosphoribosyltransferase (344 aa).

Glutamate 310 serves as the catalytic Proton acceptor.

The protein belongs to the CobT family.

The enzyme catalyses 5,6-dimethylbenzimidazole + nicotinate beta-D-ribonucleotide = alpha-ribazole 5'-phosphate + nicotinate + H(+). Its pathway is nucleoside biosynthesis; alpha-ribazole biosynthesis; alpha-ribazole from 5,6-dimethylbenzimidazole: step 1/2. In terms of biological role, catalyzes the synthesis of alpha-ribazole-5'-phosphate from nicotinate mononucleotide (NAMN) and 5,6-dimethylbenzimidazole (DMB). The chain is Nicotinate-nucleotide--dimethylbenzimidazole phosphoribosyltransferase from Shewanella amazonensis (strain ATCC BAA-1098 / SB2B).